We begin with the raw amino-acid sequence, 234 residues long: Glucosamine-6-phosphate deaminase (234 aa).

The active-site Proton acceptor; for enolization step is the Asp62. Asn128 serves as the catalytic For ring-opening step. The active-site Proton acceptor; for ring-opening step is His130. Glu135 functions as the For ring-opening step in the catalytic mechanism.

It belongs to the glucosamine/galactosamine-6-phosphate isomerase family. NagB subfamily.

The enzyme catalyses alpha-D-glucosamine 6-phosphate + H2O = beta-D-fructose 6-phosphate + NH4(+). Its pathway is amino-sugar metabolism; N-acetylneuraminate degradation; D-fructose 6-phosphate from N-acetylneuraminate: step 5/5. Functionally, catalyzes the reversible isomerization-deamination of glucosamine 6-phosphate (GlcN6P) to form fructose 6-phosphate (Fru6P) and ammonium ion. This Lactobacillus delbrueckii subsp. bulgaricus (strain ATCC 11842 / DSM 20081 / BCRC 10696 / JCM 1002 / NBRC 13953 / NCIMB 11778 / NCTC 12712 / WDCM 00102 / Lb 14) protein is Glucosamine-6-phosphate deaminase.